The sequence spans 571 residues: Potassium-transporting ATPase potassium-binding subunit (571 aa).

12 helical membrane passes run 5 to 25 (GWMQIALYGAVVLALVRPLGG), 64 to 84 (LAYAGAMVLFNVAGFVLLYAL), 136 to 156 (GLTHQNFVSAASGMAVAVALI), 179 to 199 (LYVLLPLCTVLALFYVSQGMP), 220 to 240 (VGPVASQVAIKMLGTNGGGFF), 254 to 274 (LSNFLQMLSIFVIGAALTNVF), 285 to 305 (WAILTAMGLLFLAGVTVTYWA), 330 to 350 (FGIAASALFAVITTAASCGAV), 375 to 395 (IIGGVGAGLYGMLVFVVVAIF), 421 to 441 (MLGILCLPLMMLGFTAFATVV), 488 to 508 (LAIGMLVGRFFVKIPVLAIAG), and 527 to 547 (GGLFVGLLVGVVLIIGGLTFF).

This sequence belongs to the KdpA family. The system is composed of three essential subunits: KdpA, KdpB and KdpC.

The protein resides in the cell inner membrane. Part of the high-affinity ATP-driven potassium transport (or Kdp) system, which catalyzes the hydrolysis of ATP coupled with the electrogenic transport of potassium into the cytoplasm. This subunit binds the periplasmic potassium ions and delivers the ions to the membrane domain of KdpB through an intramembrane tunnel. In Methylorubrum extorquens (strain PA1) (Methylobacterium extorquens), this protein is Potassium-transporting ATPase potassium-binding subunit.